A 292-amino-acid polypeptide reads, in one-letter code: ATP synthase gamma chain (292 aa).

This sequence belongs to the ATPase gamma chain family. F-type ATPases have 2 components, CF(1) - the catalytic core - and CF(0) - the membrane proton channel. CF(1) has five subunits: alpha(3), beta(3), gamma(1), delta(1), epsilon(1). CF(0) has three main subunits: a, b and c.

It localises to the cell inner membrane. Its function is as follows. Produces ATP from ADP in the presence of a proton gradient across the membrane. The gamma chain is believed to be important in regulating ATPase activity and the flow of protons through the CF(0) complex. In Brucella canis (strain ATCC 23365 / NCTC 10854 / RM-666), this protein is ATP synthase gamma chain.